A 59-amino-acid polypeptide reads, in one-letter code: Large ribosomal subunit protein bL32 (59 aa).

The disordered stretch occupies residues M1 to D59. The segment covering R49–D59 has biased composition (basic residues).

This sequence belongs to the bacterial ribosomal protein bL32 family.

The polypeptide is Large ribosomal subunit protein bL32 (Alkalilimnicola ehrlichii (strain ATCC BAA-1101 / DSM 17681 / MLHE-1)).